A 683-amino-acid chain; its full sequence is U4/U6 small nuclear ribonucleoprotein Prp3 (683 aa).

The PWI domain maps to 1–87; it reads MALSKRELDE…HSKSSSDRSR (87 aa). Over residues 73–107 the composition is skewed to basic and acidic residues; that stretch reads GRSSRHSKSSSDRSRKRELKEVFGDDSEISKESSG. Residues 73 to 135 are disordered; that stretch reads GRSSRHSKSS…IPGPPSESPG (63 aa). Lysine 139 is covalently cross-linked (Glycyl lysine isopeptide (Lys-Gly) (interchain with G-Cter in SUMO2)). Residues 161 to 183 form a disordered region; sequence SFISPPAPQPKTPSSSQPERLPI. A Phosphoserine modification is found at serine 164. Residues lysine 244 and lysine 252 each participate in a glycyl lysine isopeptide (Lys-Gly) (interchain with G-Cter in SUMO2) cross-link. The mediates interaction with SART3 stretch occupies residues 416-550; the sequence is NLVEHPAQLN…VHISVYRVRN (135 aa). Position 619 is a phosphoserine (serine 619).

In terms of assembly, component of the precatalytic spliceosome (spliceosome B complex). Component of the U4/U6-U5 tri-snRNP complex, a building block of the precatalytic spliceosome (spliceosome B complex). The U4/U6-U5 tri-snRNP complex is composed of the U4, U6 and U5 snRNAs and at least PRPF3, PRPF4, PRPF6, PRPF8, PRPF31, SNRNP200, TXNL4A, SNRNP40, SNRPB, SNRPD1, SNRPD2, SNRPD3, SNRPE, SNRPF, SNRPG, DDX23, CD2BP2, PPIH, SNU13, EFTUD2, SART1 and USP39, plus LSM2, LSM3, LSM4, LSM5, LSM6, LSM7 and LSM8. Interacts directly with PRPF4. Part of a heteromeric complex containing PPIH, PRPF3 and PRPF4 that is stable in the absence of RNA. Interacts with SART3; the interaction is direct and recruits the deubiquitinase USP4 to PRPF3. Interacts with PRPF19. Interacts ('Lys-63'-linked polyubiquitinated) with PRPF8 (via the MPN (JAB/Mov34) domain); may stabilize the U4/U6-U5 tri-snRNP complex. Interacts with ERCC6. In terms of processing, ubiquitinated. Undergoes 'Lys-63'-linked polyubiquitination by PRPF19 and deubiquitination by USP4. 'Lys-63'-linked ubiquitination increases the affinity for PRPF8 and may regulate the assembly of the U4/U6-U5 tri-snRNP complex.

It localises to the nucleus. Its subcellular location is the nucleus speckle. Functionally, plays a role in pre-mRNA splicing as component of the U4/U6-U5 tri-snRNP complex that is involved in spliceosome assembly, and as component of the precatalytic spliceosome (spliceosome B complex). The protein is U4/U6 small nuclear ribonucleoprotein Prp3 (Prpf3) of Mus musculus (Mouse).